Reading from the N-terminus, the 381-residue chain is MYLSRFKQSGFRNLAPLNLEFDPHVNVFLGENAQGKTNLLEAIYFLAISRSHRTSNDREMIAFGQDFASLAGRVHKRQLDLDLRIVISKKGKSAWVNRVEQARLSKYVGHLNAILFSPEDMELVKGAPSLRRRFMDLEFGQINPEYLYFASQYRQLLQQRNNYLKQLARRQASDQVLLGVLTEQVATAASELIWRRYRYLADLNRYAAEAYRAISGQREELRVLYRPSAKEITAADQPAQIKQKLLDRFAEIADDELRRATTQLGPHRDDLEFQLDGKNAHLFASQGQQRTIALSLKLSEIQLIKQLTGEEPILLLDDVMSELDQNRQAALLNFIHGQTQTFITTTDLDSISQEIVKQPRIFYIHSGQIIEKEEGLNGRRR.

30 to 37 (GENAQGKT) provides a ligand contact to ATP.

This sequence belongs to the RecF family.

It is found in the cytoplasm. Functionally, the RecF protein is involved in DNA metabolism; it is required for DNA replication and normal SOS inducibility. RecF binds preferentially to single-stranded, linear DNA. It also seems to bind ATP. The chain is DNA replication and repair protein RecF from Lactobacillus delbrueckii subsp. bulgaricus (strain ATCC BAA-365 / Lb-18).